The chain runs to 400 residues: tRNA-specific 2-thiouridylase MnmA (400 aa).

ATP is bound by residues 19–26 (AMSGGVDS) and L45. Catalysis depends on C113, which acts as the Nucleophile. The cysteines at positions 113 and 210 are disulfide-linked. G137 contributes to the ATP binding site. An interaction with tRNA region spans residues 160 to 162 (RDQ). The active-site Cysteine persulfide intermediate is the C210.

The protein belongs to the MnmA/TRMU family.

The protein resides in the cytoplasm. The enzyme catalyses S-sulfanyl-L-cysteinyl-[protein] + uridine(34) in tRNA + AH2 + ATP = 2-thiouridine(34) in tRNA + L-cysteinyl-[protein] + A + AMP + diphosphate + H(+). Functionally, catalyzes the 2-thiolation of uridine at the wobble position (U34) of tRNA, leading to the formation of s(2)U34. This is tRNA-specific 2-thiouridylase MnmA from Nitrobacter winogradskyi (strain ATCC 25391 / DSM 10237 / CIP 104748 / NCIMB 11846 / Nb-255).